The sequence spans 329 residues: NADH-quinone oxidoreductase subunit H (329 aa).

A run of 8 helical transmembrane segments spans residues 11–31, 81–101, 114–134, 154–174, 187–207, 238–258, 270–290, and 309–329; these read IVVA…CGAL, LIFT…FAVV, IGLL…LFAG, ISYE…TGSF, TWFI…GVAV, FFVG…TLFF, QLSF…FILL, and FCLP…LAAQ.

This sequence belongs to the complex I subunit 1 family. NDH-1 is composed of 13 different subunits. Subunits NuoA, H, J, K, L, M, N constitute the membrane sector of the complex.

The protein localises to the cell inner membrane. It carries out the reaction a quinone + NADH + 5 H(+)(in) = a quinol + NAD(+) + 4 H(+)(out). NDH-1 shuttles electrons from NADH, via FMN and iron-sulfur (Fe-S) centers, to quinones in the respiratory chain. The immediate electron acceptor for the enzyme in this species is believed to be ubiquinone. Couples the redox reaction to proton translocation (for every two electrons transferred, four hydrogen ions are translocated across the cytoplasmic membrane), and thus conserves the redox energy in a proton gradient. This subunit may bind ubiquinone. This Azotobacter vinelandii (strain DJ / ATCC BAA-1303) protein is NADH-quinone oxidoreductase subunit H.